The chain runs to 309 residues: D-alanine--D-alanine ligase (309 aa).

Positions 110–305 (KLCWTGAGLP…FQELVWHILE (196 aa)) constitute an ATP-grasp domain. 136 to 191 (RQALGFPVIVKPAEEGSSIGMSRAATAEELAQAWERASGYGCAVFAERWIDGVEYT) provides a ligand contact to ATP. Mg(2+)-binding residues include Asp259, Glu272, and Asn274.

This sequence belongs to the D-alanine--D-alanine ligase family. The cofactor is Mg(2+). It depends on Mn(2+) as a cofactor.

The protein localises to the cytoplasm. The enzyme catalyses 2 D-alanine + ATP = D-alanyl-D-alanine + ADP + phosphate + H(+). The protein operates within cell wall biogenesis; peptidoglycan biosynthesis. In terms of biological role, cell wall formation. The sequence is that of D-alanine--D-alanine ligase from Methylococcus capsulatus (strain ATCC 33009 / NCIMB 11132 / Bath).